A 509-amino-acid polypeptide reads, in one-letter code: Heat shock 70 kDa protein 14-A (509 aa).

It belongs to the heat shock protein 70 family. As to quaternary structure, component of ribosome-associated complex (RAC).

The protein resides in the cytoplasm. The protein localises to the cytosol. In terms of biological role, component of the ribosome-associated complex (RAC), a complex involved in folding or maintaining nascent polypeptides in a folding-competent state. The polypeptide is Heat shock 70 kDa protein 14-A (hspa14-a) (Xenopus laevis (African clawed frog)).